Reading from the N-terminus, the 327-residue chain is uncharacterized protein (327 aa).

The helical transmembrane segment at 13-33 (IICIISIIVLLLIIISLYPHK) threads the bilayer.

It localises to the membrane. This is an uncharacterized protein from Caenorhabditis elegans.